We begin with the raw amino-acid sequence, 178 residues long: N-alpha-acetyltransferase 20 (178 aa).

In terms of domain architecture, N-acetyltransferase spans 2-157; sequence TTLRAFTCDD…DAYDMRKALS (156 aa).

This sequence belongs to the acetyltransferase family. ARD1 subfamily. In terms of assembly, component of the N-terminal acetyltransferase B (NatB) complex which is composed of naa20 and naa25.

It is found in the cytoplasm. Its subcellular location is the nucleus. It carries out the reaction N-terminal L-methionyl-L-asparaginyl-[protein] + acetyl-CoA = N-terminal N(alpha)-acetyl-L-methionyl-L-asparaginyl-[protein] + CoA + H(+). The enzyme catalyses N-terminal L-methionyl-L-glutaminyl-[protein] + acetyl-CoA = N-terminal N(alpha)-acetyl-L-methionyl-L-glutaminyl-[protein] + CoA + H(+). The catalysed reaction is N-terminal L-methionyl-L-aspartyl-[protein] + acetyl-CoA = N-terminal N(alpha)-acetyl-L-methionyl-L-aspartyl-[protein] + CoA + H(+). It catalyses the reaction N-terminal L-methionyl-L-glutamyl-[protein] + acetyl-CoA = N-terminal N(alpha)-acetyl-L-methionyl-L-glutamyl-[protein] + CoA + H(+). In terms of biological role, catalytic subunit of the NatB complex which catalyzes acetylation of the N-terminal methionine residues of peptides beginning with Met-Asp, Met-Glu, Met-Asn and Met-Gln. Proteins with cell cycle functions are overrepresented in the pool of NatB substrates. Required for maintaining the structure and function of actomyosin fibers and for proper cellular migration. In Danio rerio (Zebrafish), this protein is N-alpha-acetyltransferase 20 (naa20).